The sequence spans 229 residues: Growth factor receptor-bound protein 2 (229 aa).

SH3 domains are found at residues 1–58 (MEAV…MKPH) and 168–227 (QQPT…PVNR). The SH2 domain occupies 60 to 171 (WFFGKIPRAK…RATNLLQQPT (112 aa)).

It is found in the nucleus. Its subcellular location is the cytoplasm. The protein localises to the endosome. It localises to the golgi apparatus. Its function is as follows. Adapter protein that provides a critical link between cell surface growth factor receptors and the Ras signaling pathway. Promotes meiotic reinitiation during oocyte maturation. The chain is Growth factor receptor-bound protein 2 from Xenopus tropicalis (Western clawed frog).